Here is a 592-residue protein sequence, read N- to C-terminus: Putative phosphatidylinositol 4-kinase alpha-like protein P2 (592 aa).

A pleckstrin homology (PH) domain conferring phosphoinositide binding specificity region spans residues E180–L318. Positions K275–R576 constitute a PI3K/PI4K catalytic domain. Residues V281 to E287 form a G-loop region. The segment at Q441–N449 is catalytic loop. Positions H460–T484 are activation loop.

It belongs to the PI3/PI4-kinase family. Type III PI4K subfamily.

This is Putative phosphatidylinositol 4-kinase alpha-like protein P2 (PI4KAP2) from Homo sapiens (Human).